The following is a 274-amino-acid chain: Type II restriction enzyme HgiBI (274 aa).

Belongs to the TdeIII type II restriction endonuclease family.

The enzyme catalyses Endonucleolytic cleavage of DNA to give specific double-stranded fragments with terminal 5'-phosphates.. Its function is as follows. A P subtype restriction enzyme that recognizes the double-stranded sequence 5'-GGWCC-3' and cleaves after G-1. This system is less active than isoschizomeric RM.HgiEI. This Herpetosiphon aurantiacus (Herpetosiphon giganteus) protein is Type II restriction enzyme HgiBI.